Reading from the N-terminus, the 641-residue chain is Chaperone protein DnaK (641 aa).

T199 bears the Phosphothreonine; by autocatalysis mark. A disordered region spans residues 602 to 641; that stretch reads MYADQADQAQQAGGQEEGQAKSADDAVDAEFEEVKDDDKK. Residues 604–615 are compositionally biased toward low complexity; it reads ADQADQAQQAGG. Residues 626 to 641 are compositionally biased toward acidic residues; sequence DAVDAEFEEVKDDDKK.

This sequence belongs to the heat shock protein 70 family.

In terms of biological role, acts as a chaperone. In Marinobacter nauticus (strain ATCC 700491 / DSM 11845 / VT8) (Marinobacter aquaeolei), this protein is Chaperone protein DnaK.